We begin with the raw amino-acid sequence, 916 residues long: Isoleucine--tRNA ligase (916 aa).

The 'HIGH' region signature appears at Pro-57–His-67. Position 554 (Glu-554) interacts with L-isoleucyl-5'-AMP. Positions Lys-595 to Ser-599 match the 'KMSKS' region motif. Residue Lys-598 participates in ATP binding. Residues Cys-885, Cys-888, Cys-905, and Cys-908 each contribute to the Zn(2+) site.

Belongs to the class-I aminoacyl-tRNA synthetase family. IleS type 1 subfamily. As to quaternary structure, monomer. Zn(2+) serves as cofactor.

It localises to the cytoplasm. The catalysed reaction is tRNA(Ile) + L-isoleucine + ATP = L-isoleucyl-tRNA(Ile) + AMP + diphosphate. In terms of biological role, catalyzes the attachment of isoleucine to tRNA(Ile). As IleRS can inadvertently accommodate and process structurally similar amino acids such as valine, to avoid such errors it has two additional distinct tRNA(Ile)-dependent editing activities. One activity is designated as 'pretransfer' editing and involves the hydrolysis of activated Val-AMP. The other activity is designated 'posttransfer' editing and involves deacylation of mischarged Val-tRNA(Ile). In Staphylococcus epidermidis (strain ATCC 12228 / FDA PCI 1200), this protein is Isoleucine--tRNA ligase.